The following is a 33-amino-acid chain: uncharacterized protein (33 aa).

Positions 1-33 (MGSVIKKRRKRMSKKKHRKLLRRTRVQRRKLGK) are disordered.

This is an uncharacterized protein from Mycobacterium tuberculosis (strain CDC 1551 / Oshkosh).